Reading from the N-terminus, the 429-residue chain is uncharacterized protein (429 aa).

10 helical membrane passes run 26–46 (VALTGAAAVVVLPVITSHDIF), 51–71 (TGIDWDVIFLLVGMMIIVGVL), 99–119 (LVLVSALASALLDNVTTVLLI), 135–155 (TSFLMAEVFASNIGGAATLVG), 173–193 (FMLHLTPLVVIVLIALIAVLP), 223–243 (LLVKCGAVLVLVFAAFVAHPV), 278–298 (TLLFFAGLFIMVGALVKTGVV), 311–331 (GNIVATAFLILGVSAPISGII), 361–381 (WWALALGADFGGNLTAIGASA), and 407–427 (VVTAVSIALAAIYLWLRYFVL).

Belongs to the CitM (TC 2.A.11) transporter family.

It localises to the cell membrane. This is an uncharacterized protein from Mycobacterium tuberculosis (strain ATCC 25618 / H37Rv).